The primary structure comprises 316 residues: Annexin D5 (316 aa).

At alanine 2 the chain carries N-acetylalanine. 4 Annexin repeats span residues 11-82, 83-154, 166-238, and 242-313; these read PSPR…LWMP, EAVE…AYLN, ASVE…TILQ, and NSCF…SLLG. Positions 24, 26, 28, and 68 each coordinate Ca(2+). Serine 95 carries the post-translational modification Phosphoserine. Residue threonine 112 is modified to Phosphothreonine. Ca(2+) is bound at residue glycine 259. At tyrosine 284 the chain carries Phosphotyrosine. The Ca(2+) site is built by aspartate 299 and threonine 300.

This sequence belongs to the annexin (TC 1.A.31.1) family. In terms of tissue distribution, expressed mainly in roots and flowers. Lower in stems and leaves.

This chain is Annexin D5 (ANN5), found in Arabidopsis thaliana (Mouse-ear cress).